We begin with the raw amino-acid sequence, 422 residues long: La-related protein 6A (422 aa).

The disordered stretch occupies residues 1–94 (MSSLPLRSGE…DHGENPVETD (94 aa)). The span at 48–61 (VTESSDDVVVNVSE) shows a compositional bias: low complexity. The span at 73–89 (DHERNSGEDRDQDHGEN) shows a compositional bias: basic and acidic residues. The region spanning 97–188 (VVPIDELNQK…KRLSPLPEIR (92 aa)) is the HTH La-type RNA-binding domain. In terms of domain architecture, RRM spans 193-283 (FTVLVENLPE…NGLRVKLLEQ (91 aa)). Residues 286–422 (GKFAQRRPAR…PTSTQTSHEV (137 aa)) are disordered. Over residues 295 to 348 (RREVDKEKDTTGRVHDQTGGEKNKKTREHQNHRLHHSDNPADDDGGNHQKDKNG) the composition is skewed to basic and acidic residues.

The protein resides in the nucleus. In terms of biological role, transcriptional regulator. This is La-related protein 6A (LARP6A) from Arabidopsis thaliana (Mouse-ear cress).